The sequence spans 44 residues: Photosystem I reaction center subunit IX (44 aa).

A helical membrane pass occupies residues tyrosine 7 to isoleucine 27.

Belongs to the PsaJ family.

Its subcellular location is the plastid. It localises to the chloroplast thylakoid membrane. Its function is as follows. May help in the organization of the PsaE and PsaF subunits. The polypeptide is Photosystem I reaction center subunit IX (Lotus japonicus (Lotus corniculatus var. japonicus)).